The sequence spans 57 residues: Plasma membrane proteolipid 3 (57 aa).

The helical transmembrane segment at 34 to 54 (INILLTILGYLPGIVHALYII) threads the bilayer.

This sequence belongs to the UPF0057 (PMP3) family.

It localises to the cell membrane. In terms of biological role, plays a role in the regulation of membrane potential. Could mediate a proton leak. The protein is Plasma membrane proteolipid 3 (pmp-1) of Neurospora crassa (strain ATCC 24698 / 74-OR23-1A / CBS 708.71 / DSM 1257 / FGSC 987).